We begin with the raw amino-acid sequence, 394 residues long: Dual-specificity RNA methyltransferase RlmN (394 aa).

Glu92 (proton acceptor) is an active-site residue. Positions 98–341 (ENDRGTLCIS…TTVRRTRGDD (244 aa)) constitute a Radical SAM core domain. An intrachain disulfide couples Cys105 to Cys346. [4Fe-4S] cluster-binding residues include Cys112, Cys116, and Cys119. Residues 166–167 (GE), Ser198, 220–222 (SLH), and Asn303 contribute to the S-adenosyl-L-methionine site. The active-site S-methylcysteine intermediate is the Cys346. The tract at residues 374–394 (DSAVQRRADAAPSGSATETTR) is disordered.

The protein belongs to the radical SAM superfamily. RlmN family. Requires [4Fe-4S] cluster as cofactor.

It localises to the cytoplasm. It carries out the reaction adenosine(2503) in 23S rRNA + 2 reduced [2Fe-2S]-[ferredoxin] + 2 S-adenosyl-L-methionine = 2-methyladenosine(2503) in 23S rRNA + 5'-deoxyadenosine + L-methionine + 2 oxidized [2Fe-2S]-[ferredoxin] + S-adenosyl-L-homocysteine. It catalyses the reaction adenosine(37) in tRNA + 2 reduced [2Fe-2S]-[ferredoxin] + 2 S-adenosyl-L-methionine = 2-methyladenosine(37) in tRNA + 5'-deoxyadenosine + L-methionine + 2 oxidized [2Fe-2S]-[ferredoxin] + S-adenosyl-L-homocysteine. In terms of biological role, specifically methylates position 2 of adenine 2503 in 23S rRNA and position 2 of adenine 37 in tRNAs. m2A2503 modification seems to play a crucial role in the proofreading step occurring at the peptidyl transferase center and thus would serve to optimize ribosomal fidelity. This chain is Dual-specificity RNA methyltransferase RlmN, found in Methylibium petroleiphilum (strain ATCC BAA-1232 / LMG 22953 / PM1).